Here is a 264-residue protein sequence, read N- to C-terminus: Thymidylate synthase (264 aa).

A dUMP-binding site is contributed by Arg-21. His-51 contributes to the (6R)-5,10-methylene-5,6,7,8-tetrahydrofolate binding site. 126–127 (RR) contributes to the dUMP binding site. Cys-146 (nucleophile) is an active-site residue. DUMP is bound by residues 166 to 169 (RSCD), Asn-177, and 207 to 209 (HLY). Asp-169 provides a ligand contact to (6R)-5,10-methylene-5,6,7,8-tetrahydrofolate. (6R)-5,10-methylene-5,6,7,8-tetrahydrofolate is bound at residue Ala-263.

The protein belongs to the thymidylate synthase family. Bacterial-type ThyA subfamily. Homodimer.

The protein localises to the cytoplasm. The catalysed reaction is dUMP + (6R)-5,10-methylene-5,6,7,8-tetrahydrofolate = 7,8-dihydrofolate + dTMP. Its pathway is pyrimidine metabolism; dTTP biosynthesis. Its function is as follows. Catalyzes the reductive methylation of 2'-deoxyuridine-5'-monophosphate (dUMP) to 2'-deoxythymidine-5'-monophosphate (dTMP) while utilizing 5,10-methylenetetrahydrofolate (mTHF) as the methyl donor and reductant in the reaction, yielding dihydrofolate (DHF) as a by-product. This enzymatic reaction provides an intracellular de novo source of dTMP, an essential precursor for DNA biosynthesis. The protein is Thymidylate synthase of Shigella flexneri serotype 5b (strain 8401).